A 149-amino-acid chain; its full sequence is uncharacterized protein (149 aa).

The residue at position 21 (serine 21) is a Phosphoserine. 2 helical membrane-spanning segments follow: residues 48–68 (FMEF…WVLG) and 72–92 (VLAA…FQLV). A disordered region spans residues 116 to 149 (AEEVPPPSYPSLEEENEGNEEIEESEEMNTLLSK). The span at 127–142 (LEEENEGNEEIEESEE) shows a compositional bias: acidic residues.

The protein localises to the membrane. This is an uncharacterized protein from Schizosaccharomyces pombe (strain 972 / ATCC 24843) (Fission yeast).